The chain runs to 119 residues: Early E3 13.3 kDa protein (119 aa).

This Canine adenovirus serotype 1 (strain Utrecht) (CAdV-1) protein is Early E3 13.3 kDa protein.